A 553-amino-acid chain; its full sequence is MLSVRIAAAVARALPRRAGLVSKNALGSSFVGTRNLHASNTRLQKTGTAEMSSILEERILGADTSVDLEETGRVLSIGDGIARVHGLRNVQAEEMVEFSSGLKGMSLNLEPDNVGVVVFGNDKLIKEGDIVKRTGAIVDVPVGDELLGRVVDALGNAIDGKGPVGSKIRRRVGLKAPGIIPRISVREPMQTGIKAVDSLVPIGRGQRELIIGDRQTGKTSIAIDTIINQKRFNDGTDEKKKLYCIYVAIGQKRSTVAQLVKRLTDADAMKYTIVVSATASDAAPLQYLAPYSGCSMGEYFRDNGKHALIIYDDLSKQAVAYRQMSLLLRRPPGREAYPGDVFYLHSRLLERAAKMNDSFGGGSLTALPVIETQAGDVSAYIPTNVISITDGQIFLETELFYKGIRPAINVGLSVSRVGSAAQTRAMKQVAGTMKLELAQYREVAAFAQFGSDLDAATQQLLSRGVRLTELLKQGQYSPMAIEEQVAVIYAGVRGYLDKLEPSKITKFESAFLSHVVSQHQSLLGNIRSDGKISEQSDAKLKEIVTNFLAGFEP.

The transit peptide at 1–43 directs the protein to the mitochondrion; sequence MLSVRIAAAVARALPRRAGLVSKNALGSSFVGTRNLHASNTRL. Ser-53 and Ser-65 each carry phosphoserine. At Ser-76 the chain carries Phosphoserine; alternate. Ser-76 carries an O-linked (GlcNAc) serine; alternate glycan. Position 106 is a phosphoserine (Ser-106). Lys-123, Lys-126, and Lys-132 each carry N6-acetyllysine. Thr-134 carries the post-translational modification Phosphothreonine. An N6-acetyllysine; alternate modification is found at Lys-161. N6-succinyllysine; alternate is present on Lys-161. The residue at position 166 (Ser-166) is a Phosphoserine. Lys-167 bears the N6-acetyllysine; alternate mark. Lys-167 carries the post-translational modification N6-succinyllysine; alternate. The residue at position 184 (Ser-184) is a Phosphoserine. Position 204 is an omega-N-methylarginine (Arg-204). ATP contacts are provided by Gln-215, Gly-217, Lys-218, Thr-219, and Ser-220. Thr-219 lines the Mg(2+) pocket. N6-acetyllysine; alternate is present on residues Lys-230 and Lys-239. 2 positions are modified to N6-succinyllysine; alternate: Lys-230 and Lys-239. Residue Lys-240 is modified to N6-acetyllysine. 2 positions are modified to N6-acetyllysine; alternate: Lys-261 and Lys-305. An N6-succinyllysine; alternate mark is found at Lys-261 and Lys-305. Asp-312 is a Mg(2+) binding site. Lys-427 carries the post-translational modification N6-acetyllysine; alternate. Lys-427 bears the N6-succinyllysine; alternate mark. Lys-434 carries the N6-acetyllysine modification. Positions 473 and 475 each coordinate ATP. 4 positions are modified to N6-acetyllysine; alternate: Lys-498, Lys-506, Lys-531, and Lys-539. Residues Lys-498, Lys-506, Lys-531, and Lys-539 each carry the N6-succinyllysine; alternate modification. At Lys-541 the chain carries N6-acetyllysine.

Belongs to the ATPase alpha/beta chains family. Homotrimer. Component of the ATP synthase complex composed at least of ATP5F1A/subunit alpha, ATP5F1B/subunit beta, ATP5MC1/subunit c (homooctomer), MT-ATP6/subunit a, MT-ATP8/subunit 8, ATP5ME/subunit e, ATP5MF/subunit f, ATP5MG/subunit g, ATP5MK/subunit k, ATP5MJ/subunit j, ATP5F1C/subunit gamma, ATP5F1D/subunit delta, ATP5F1E/subunit epsilon, ATP5PF/subunit F6, ATP5PB/subunit b, ATP5PD/subunit d, ATP5PO/subunit OSCP. ATP synthase complex consists of a soluble F(1) head domain (subunits alpha(3) and beta(3)) - the catalytic core - and a membrane F(0) domain - the membrane proton channel (subunits c, a, 8, e, f, g, k and j). These two domains are linked by a central stalk (subunits gamma, delta, and epsilon) rotating inside the F1 region and a stationary peripheral stalk (subunits F6, b, d, and OSCP). Interacts with ATPAF2. Interacts with HRG; the interaction occurs on the surface of T-cells and alters the cell morphology when associated with concanavalin (in vitro). Interacts with PLG (angiostatin peptide); the interaction inhibits most of the angiogenic properties of angiostatin. Interacts with BLOC1S1. Interacts with BCL2L1 isoform BCL-X(L); the interaction mediates the association of BCL2L1 isoform BCL-X(L) with the mitochondrial membrane F(1)F(0) ATP synthase and enhances neurons metabolic efficiency. Interacts with CLN5 and PPT1. Interacts with S100A1; this interaction increases F1-ATPase activity. Interacts with ABCB7; this interaction allows the regulation of cellular iron homeostasis and cellular reactive oxygen species (ROS) levels in cardiomyocytes. In terms of processing, acetylated on lysine residues. BLOC1S1 is required for acetylation. In terms of tissue distribution, expressed in flagella of epididymal sperm.

Its subcellular location is the mitochondrion. The protein localises to the mitochondrion inner membrane. The protein resides in the cell membrane. Functionally, subunit alpha, of the mitochondrial membrane ATP synthase complex (F(1)F(0) ATP synthase or Complex V) that produces ATP from ADP in the presence of a proton gradient across the membrane which is generated by electron transport complexes of the respiratory chain. ATP synthase complex consist of a soluble F(1) head domain - the catalytic core - and a membrane F(1) domain - the membrane proton channel. These two domains are linked by a central stalk rotating inside the F(1) region and a stationary peripheral stalk. During catalysis, ATP synthesis in the catalytic domain of F(1) is coupled via a rotary mechanism of the central stalk subunits to proton translocation. In vivo, can only synthesize ATP although its ATP hydrolase activity can be activated artificially in vitro. With the catalytic subunit beta (ATP5F1B), forms the catalytic core in the F(1) domain. Subunit alpha does not bear the catalytic high-affinity ATP-binding sites. The sequence is that of ATP synthase F(1) complex subunit alpha, mitochondrial from Rattus norvegicus (Rat).